Reading from the N-terminus, the 244-residue chain is NAD-dependent protein deacetylase (244 aa).

Positions 1 to 244 constitute a Deacetylase sirtuin-type domain; that stretch reads MSATERQLQY…IGDTCRQLRA (244 aa). NAD(+) is bound by residues alanine 27, threonine 31, phenylalanine 38, arginine 39, glutamine 107, isoleucine 109, aspartate 110, and histidine 125. Phenylalanine 38 contributes to the nicotinamide binding site. Nicotinamide is bound by residues isoleucine 109 and aspartate 110. Histidine 125 acts as the Proton acceptor in catalysis. Positions 133, 136, 153, and 156 each coordinate Zn(2+). Serine 192, serine 193, asparagine 217, and isoleucine 235 together coordinate NAD(+).

Belongs to the sirtuin family. Class U subfamily. It depends on Zn(2+) as a cofactor.

The protein resides in the cytoplasm. The enzyme catalyses N(6)-acetyl-L-lysyl-[protein] + NAD(+) + H2O = 2''-O-acetyl-ADP-D-ribose + nicotinamide + L-lysyl-[protein]. In terms of biological role, NAD-dependent protein deacetylase which modulates the activities of several enzymes which are inactive in their acetylated form. This Chromobacterium violaceum (strain ATCC 12472 / DSM 30191 / JCM 1249 / CCUG 213 / NBRC 12614 / NCIMB 9131 / NCTC 9757 / MK) protein is NAD-dependent protein deacetylase.